Reading from the N-terminus, the 632-residue chain is Myrcene synthase TPS3FN, chloroplastic (632 aa).

The N-terminal 55 residues, 1–55, are a transit peptide targeting the chloroplast; it reads MHCMAVHQFSPSIVSSLPTISTYNNNHFCRFFTPKTSISPISKTKSKSSTCYPIQ. Residues R343, D380, D384, R524, and D527 each coordinate (2E)-geranyl diphosphate. 2 residues coordinate Mg(2+): D380 and D384. A DDXXD motif motif is present at residues 380–384; sequence DDIYD. 3 residues coordinate Mg(2+): D527, T531, and E535.

Belongs to the terpene synthase family. Tpsb subfamily. Mg(2+) is required as a cofactor. Mn(2+) serves as cofactor. In terms of tissue distribution, expressed in glandular trichomes two to four weeks after flowering onset.

It localises to the plastid. It is found in the chloroplast. It catalyses the reaction (2E)-geranyl diphosphate = beta-myrcene + diphosphate. The protein operates within secondary metabolite biosynthesis; terpenoid biosynthesis. Its function is as follows. Involved in monoterpene (C10) olefins biosynthesis, constituants of cannabinoids and terpenoids-rich resins. Catalyzes strictly the conversion of (2E)-geranyl diphosphate to beta-myrcene. The protein is Myrcene synthase TPS3FN, chloroplastic of Cannabis sativa (Hemp).